The sequence spans 386 residues: S-adenosylmethionine synthase (386 aa).

ATP is bound at residue histidine 17. Aspartate 19 is a binding site for Mg(2+). Residue glutamate 45 participates in K(+) binding. Positions 58 and 101 each coordinate L-methionine. The tract at residues 101–111 is flexible loop; that stretch reads QSPDISQGVTE. ATP-binding positions include 168-170, aspartate 242, 248-249, alanine 265, and lysine 269; these read DAK and RK. L-methionine is bound at residue aspartate 242. Lysine 273 is a binding site for L-methionine.

It belongs to the AdoMet synthase family. As to quaternary structure, homotetramer; dimer of dimers. Mg(2+) serves as cofactor. K(+) is required as a cofactor.

Its subcellular location is the cytoplasm. The enzyme catalyses L-methionine + ATP + H2O = S-adenosyl-L-methionine + phosphate + diphosphate. It functions in the pathway amino-acid biosynthesis; S-adenosyl-L-methionine biosynthesis; S-adenosyl-L-methionine from L-methionine: step 1/1. Catalyzes the formation of S-adenosylmethionine (AdoMet) from methionine and ATP. The overall synthetic reaction is composed of two sequential steps, AdoMet formation and the subsequent tripolyphosphate hydrolysis which occurs prior to release of AdoMet from the enzyme. The sequence is that of S-adenosylmethionine synthase from Leptospira borgpetersenii serovar Hardjo-bovis (strain JB197).